Consider the following 406-residue polypeptide: Probable 26S proteasome regulatory subunit 10B (406 aa).

ATP is bound at residue 191 to 198 (GPPGTGKT).

It belongs to the AAA ATPase family.

It is found in the cytoplasm. Its subcellular location is the nucleus. In terms of biological role, the 26S proteasome is involved in the ATP-dependent degradation of ubiquitinated proteins. The regulatory (or ATPase) complex confers ATP dependency and substrate specificity to the 26S complex. The polypeptide is Probable 26S proteasome regulatory subunit 10B (rpt-4) (Caenorhabditis elegans).